Reading from the N-terminus, the 341-residue chain is Dihydroorotate dehydrogenase (quinone) (341 aa).

Residues 59–63 and Thr-83 each bind FMN; that span reads AGLDK. Lys-63 provides a ligand contact to substrate. 108–112 is a substrate binding site; sequence NRMGF. Asn-136 and Asn-169 together coordinate FMN. Residue Asn-169 coordinates substrate. The Nucleophile role is filled by Ser-172. Asn-174 lines the substrate pocket. Residues Lys-214 and Thr-242 each contribute to the FMN site. 243–244 provides a ligand contact to substrate; it reads NT. Residues Gly-265, Gly-294, and 315–316 each bind FMN; that span reads YS.

Belongs to the dihydroorotate dehydrogenase family. Type 2 subfamily. In terms of assembly, monomer. FMN is required as a cofactor.

It is found in the cell membrane. It carries out the reaction (S)-dihydroorotate + a quinone = orotate + a quinol. It functions in the pathway pyrimidine metabolism; UMP biosynthesis via de novo pathway; orotate from (S)-dihydroorotate (quinone route): step 1/1. Its function is as follows. Catalyzes the conversion of dihydroorotate to orotate with quinone as electron acceptor. The protein is Dihydroorotate dehydrogenase (quinone) of Neisseria meningitidis serogroup C (strain 053442).